A 307-amino-acid polypeptide reads, in one-letter code: uncharacterized protein (307 aa).

The protein to B.burgdorferi BB0340.

This is an uncharacterized protein from Treponema pallidum (strain Nichols).